Here is a 356-residue protein sequence, read N- to C-terminus: S-adenosylmethionine:tRNA ribosyltransferase-isomerase (356 aa).

The protein belongs to the QueA family. Monomer.

The protein resides in the cytoplasm. The enzyme catalyses 7-aminomethyl-7-carbaguanosine(34) in tRNA + S-adenosyl-L-methionine = epoxyqueuosine(34) in tRNA + adenine + L-methionine + 2 H(+). It participates in tRNA modification; tRNA-queuosine biosynthesis. In terms of biological role, transfers and isomerizes the ribose moiety from AdoMet to the 7-aminomethyl group of 7-deazaguanine (preQ1-tRNA) to give epoxyqueuosine (oQ-tRNA). In Ralstonia nicotianae (strain ATCC BAA-1114 / GMI1000) (Ralstonia solanacearum), this protein is S-adenosylmethionine:tRNA ribosyltransferase-isomerase.